The following is a 682-amino-acid chain: Potassium-transporting ATPase ATP-binding subunit (682 aa).

Transmembrane regions (helical) follow at residues 34 to 54 (PVMF…LAMV), 58 to 78 (IAGS…TVLF), 219 to 239 (IALT…TATL), and 254 to 274 (VLVA…LSAI). D307 functions as the 4-aspartylphosphate intermediate in the catalytic mechanism. Residues D344, E348, 377–384 (FTAQSRMS), and K395 contribute to the ATP site. Mg(2+) is bound by residues D518 and D522. A run of 3 helical transmembrane segments spans residues 588 to 608 (FAII…LNVM), 616 to 636 (AILS…PLAL), and 662 to 682 (LVVP…LGLA).

Belongs to the cation transport ATPase (P-type) (TC 3.A.3) family. Type IA subfamily. As to quaternary structure, the system is composed of three essential subunits: KdpA, KdpB and KdpC.

The protein resides in the cell inner membrane. The catalysed reaction is K(+)(out) + ATP + H2O = K(+)(in) + ADP + phosphate + H(+). Part of the high-affinity ATP-driven potassium transport (or Kdp) system, which catalyzes the hydrolysis of ATP coupled with the electrogenic transport of potassium into the cytoplasm. This subunit is responsible for energy coupling to the transport system and for the release of the potassium ions to the cytoplasm. In Salmonella choleraesuis (strain SC-B67), this protein is Potassium-transporting ATPase ATP-binding subunit.